The primary structure comprises 962 residues: Nonsense-mediated mRNA decay factor SMG8 (962 aa).

Residues 634 to 661 (RSPEISSQIASSGLSSRSNSTSSGTSSA) form a disordered region. Low complexity predominate over residues 639-661 (SSQIASSGLSSRSNSTSSGTSSA).

This sequence belongs to the SMG8 family.

Its function is as follows. Involved in nonsense-mediated decay (NMD) of mRNAs containing premature stop codons. Probable component of kinase complex containing nonC and recruited to stalled ribosomes. The sequence is that of Nonsense-mediated mRNA decay factor SMG8 from Drosophila virilis (Fruit fly).